Consider the following 1076-residue polypeptide: Carbamoyl phosphate synthase large chain (1076 aa).

A carboxyphosphate synthetic domain region spans residues 1-402 (MPKREDIRKI…ALQKAIRSLE (402 aa)). ATP contacts are provided by R129, R169, G175, G176, E208, V210, E215, G241, V242, H243, Q285, and E299. In terms of domain architecture, ATP-grasp 1 spans 133-328 (KEAMRKIGLD…IAKIAAKLAV (196 aa)). Q285, E299, and N301 together coordinate Mg(2+). 3 residues coordinate Mn(2+): Q285, E299, and N301. Positions 403 to 555 (IGRYGLGCDG…YSTYEDENEA (153 aa)) are oligomerization domain. The tract at residues 556 to 939 (LRSERKKVMI…YKAELAAGMK (384 aa)) is carbamoyl phosphate synthetic domain. Residues 680–871 (AELLERLNIP…LAKIAAKLMM (192 aa)) form the ATP-grasp 2 domain. ATP-binding residues include R716, K755, L757, E762, G787, V788, H789, S790, Q830, and E842. Mg(2+)-binding residues include Q830, E842, and N844. Mn(2+) contacts are provided by Q830, E842, and N844. The 139-residue stretch at 938 to 1076 (MKLPLKGTVF…KSIQEYHEES (139 aa)) folds into the MGS-like domain. Residues 940-1076 (LPLKGTVFIS…KSIQEYHEES (137 aa)) form an allosteric domain region.

This sequence belongs to the CarB family. Composed of two chains; the small (or glutamine) chain promotes the hydrolysis of glutamine to ammonia, which is used by the large (or ammonia) chain to synthesize carbamoyl phosphate. Tetramer of heterodimers (alpha,beta)4. The cofactor is Mg(2+). Mn(2+) serves as cofactor.

It carries out the reaction hydrogencarbonate + L-glutamine + 2 ATP + H2O = carbamoyl phosphate + L-glutamate + 2 ADP + phosphate + 2 H(+). It catalyses the reaction hydrogencarbonate + NH4(+) + 2 ATP = carbamoyl phosphate + 2 ADP + phosphate + 2 H(+). Its pathway is amino-acid biosynthesis; L-arginine biosynthesis; carbamoyl phosphate from bicarbonate: step 1/1. The protein operates within pyrimidine metabolism; UMP biosynthesis via de novo pathway; (S)-dihydroorotate from bicarbonate: step 1/3. Functionally, large subunit of the glutamine-dependent carbamoyl phosphate synthetase (CPSase). CPSase catalyzes the formation of carbamoyl phosphate from the ammonia moiety of glutamine, carbonate, and phosphate donated by ATP, constituting the first step of 2 biosynthetic pathways, one leading to arginine and/or urea and the other to pyrimidine nucleotides. The large subunit (synthetase) binds the substrates ammonia (free or transferred from glutamine from the small subunit), hydrogencarbonate and ATP and carries out an ATP-coupled ligase reaction, activating hydrogencarbonate by forming carboxy phosphate which reacts with ammonia to form carbamoyl phosphate. In Archaeoglobus fulgidus (strain ATCC 49558 / DSM 4304 / JCM 9628 / NBRC 100126 / VC-16), this protein is Carbamoyl phosphate synthase large chain.